The chain runs to 486 residues: NADH-quinone oxidoreductase subunit N (486 aa).

Helical transmembrane passes span 8-28, 38-58, 73-93, 105-125, 128-148, 169-189, 196-216, 235-255, 269-289, 304-324, 325-345, 373-393, 405-427, and 454-474; these read FIAL…MLAV, ATLS…VLGV, ACFY…LAHA, LYLL…AQHL, LFIG…YAFF, FLLF…FAGL, HVLS…GLGF, PAPV…AVLL, LLNI…NLLA, IAHL…AVEA, VGVY…VITL, AVMT…GFIG, HLWW…YLRV, and IMLV…QPLL.

The protein belongs to the complex I subunit 2 family. As to quaternary structure, NDH-1 is composed of 13 different subunits. Subunits NuoA, H, J, K, L, M, N constitute the membrane sector of the complex.

The protein resides in the cell inner membrane. It carries out the reaction a quinone + NADH + 5 H(+)(in) = a quinol + NAD(+) + 4 H(+)(out). NDH-1 shuttles electrons from NADH, via FMN and iron-sulfur (Fe-S) centers, to quinones in the respiratory chain. The immediate electron acceptor for the enzyme in this species is believed to be ubiquinone. Couples the redox reaction to proton translocation (for every two electrons transferred, four hydrogen ions are translocated across the cytoplasmic membrane), and thus conserves the redox energy in a proton gradient. The chain is NADH-quinone oxidoreductase subunit N from Pseudomonas aeruginosa (strain ATCC 15692 / DSM 22644 / CIP 104116 / JCM 14847 / LMG 12228 / 1C / PRS 101 / PAO1).